We begin with the raw amino-acid sequence, 383 residues long: Paralemmin-1 (383 aa).

Methionine 1 bears the N-acetylmethionine mark. Residues aspartate 7 to glycine 101 are a coiled coil. Disordered stretches follow at residues arginine 51–methionine 164, threonine 242–glutamine 293, and serine 333–lysine 374. Over residues aspartate 69–aspartate 96 the composition is skewed to basic and acidic residues. Phosphoserine occurs at positions 116, 122, and 124. The segment covering glutamate 133–leucine 143 has biased composition (polar residues). 3 positions are modified to phosphothreonine: threonine 141, threonine 145, and threonine 153. Phosphoserine is present on residues serine 157 and serine 161. Threonine 242 is modified (phosphothreonine). A Phosphoserine modification is found at serine 244. Residues glycine 257–threonine 273 show a composition bias toward basic and acidic residues. A Phosphoserine modification is found at serine 345. Over residues glutamine 357–threonine 367 the composition is skewed to polar residues. 3 positions are modified to phosphothreonine: threonine 361, threonine 362, and threonine 363. Serine 365 carries the phosphoserine modification. Phosphothreonine is present on threonine 367. 2 S-palmitoyl cysteine lipidation sites follow: cysteine 377 and cysteine 379. The residue at position 380 (cysteine 380) is a Cysteine methyl ester. A lipid anchor (S-farnesyl cysteine) is attached at cysteine 380. A propeptide spans serine 381–methionine 383 (removed in mature form).

The protein belongs to the paralemmin family. As to quaternary structure, interacts with dopamine receptor DRD3. Expressed in neurons cells of neuropil-rich areas of the brain, in the Purkinje cells of the cerebellum, in cells of the cerebral cortex, hippocampus, brainstem nuclei and glial processes and sheaths. Expressed in the medulla of the adrenal chromaffin cells and renal duct cells (at protein level).

It is found in the cell membrane. The protein localises to the cell projection. Its subcellular location is the filopodium membrane. The protein resides in the axon. It localises to the dendrite. It is found in the dendritic spine. The protein localises to the basolateral cell membrane. Its subcellular location is the apicolateral cell membrane. Functionally, involved in plasma membrane dynamics and cell process formation. Necessary for axonal and dendritic filopodia induction, for dendritic spine maturation and synapse formation in a palmitoylation-dependent manner. This Rattus norvegicus (Rat) protein is Paralemmin-1 (Palm).